The chain runs to 307 residues: Putative serine/threonine-protein phosphatase C22H10.04 (307 aa).

Mn(2+)-binding residues include D51, H53, D79, and N111. Catalysis depends on H112, which acts as the Proton donor. Positions 161 and 236 each coordinate Mn(2+).

The protein belongs to the PPP phosphatase family. PP-X subfamily. Mn(2+) is required as a cofactor.

The enzyme catalyses O-phospho-L-seryl-[protein] + H2O = L-seryl-[protein] + phosphate. It catalyses the reaction O-phospho-L-threonyl-[protein] + H2O = L-threonyl-[protein] + phosphate. In Schizosaccharomyces pombe (strain 972 / ATCC 24843) (Fission yeast), this protein is Putative serine/threonine-protein phosphatase C22H10.04.